We begin with the raw amino-acid sequence, 216 residues long: Octanoyltransferase (216 aa).

Residues 32–207 form the BPL/LPL catalytic domain; it reads ENSPDELWLV…TFSQLLGYEH (176 aa). Residues 71–78, 138–140, and 151–153 each bind substrate; these read RGGQVTYH, SLG, and GLA. Catalysis depends on Cys169, which acts as the Acyl-thioester intermediate.

This sequence belongs to the LipB family.

Its subcellular location is the cytoplasm. The catalysed reaction is octanoyl-[ACP] + L-lysyl-[protein] = N(6)-octanoyl-L-lysyl-[protein] + holo-[ACP] + H(+). Its pathway is protein modification; protein lipoylation via endogenous pathway; protein N(6)-(lipoyl)lysine from octanoyl-[acyl-carrier-protein]: step 1/2. Catalyzes the transfer of endogenously produced octanoic acid from octanoyl-acyl-carrier-protein onto the lipoyl domains of lipoate-dependent enzymes. Lipoyl-ACP can also act as a substrate although octanoyl-ACP is likely to be the physiological substrate. This Shewanella amazonensis (strain ATCC BAA-1098 / SB2B) protein is Octanoyltransferase.